Reading from the N-terminus, the 150-residue chain is Transcriptional repressor NrdR (150 aa).

A zinc finger lies at 3–34 (CPFCQHDHSKVIDSRVIDAGSAIRRRRECSKC). The region spanning 46–136 (LLVVKRNGVT…VYKSFDSADD (91 aa)) is the ATP-cone domain.

The protein belongs to the NrdR family. Requires Zn(2+) as cofactor.

Negatively regulates transcription of bacterial ribonucleotide reductase nrd genes and operons by binding to NrdR-boxes. In Corynebacterium glutamicum (strain ATCC 13032 / DSM 20300 / JCM 1318 / BCRC 11384 / CCUG 27702 / LMG 3730 / NBRC 12168 / NCIMB 10025 / NRRL B-2784 / 534), this protein is Transcriptional repressor NrdR.